Reading from the N-terminus, the 212-residue chain is Large ribosomal subunit protein uL3 (212 aa).

Position 153 is an N5-methylglutamine (Q153).

This sequence belongs to the universal ribosomal protein uL3 family. Part of the 50S ribosomal subunit. Forms a cluster with proteins L14 and L19. In terms of processing, methylated by PrmB.

Functionally, one of the primary rRNA binding proteins, it binds directly near the 3'-end of the 23S rRNA, where it nucleates assembly of the 50S subunit. This is Large ribosomal subunit protein uL3 from Marinobacter nauticus (strain ATCC 700491 / DSM 11845 / VT8) (Marinobacter aquaeolei).